Here is a 173-residue protein sequence, read N- to C-terminus: Transmembrane protein 278 (173 aa).

Over residues 1-14 the composition is skewed to acidic residues; the sequence is MSEQERETEEDEGV. The disordered stretch occupies residues 1-25; the sequence is MSEQERETEEDEGVASDTAPMLPRR. The next 3 membrane-spanning stretches (helical) occupy residues 31–51, 53–73, and 107–127; these read HISV…VLSG, ALVG…LVLL, and AALI…AAAA. A disordered region spans residues 141–165; sequence DPARTPAPRRPPRSSGDLADGHPDE.

This sequence belongs to the TMEM88 family.

It localises to the membrane. The chain is Transmembrane protein 278 (Tmem278) from Mus musculus (Mouse).